A 225-amino-acid polypeptide reads, in one-letter code: Probable methylthioribulose-1-phosphate dehydratase (225 aa).

Residue C86 participates in substrate binding. H104 and H106 together coordinate Zn(2+). The active-site Proton donor/acceptor is E127. H183 contributes to the Zn(2+) binding site.

Belongs to the aldolase class II family. MtnB subfamily. It depends on Zn(2+) as a cofactor.

It localises to the cytoplasm. It catalyses the reaction 5-(methylsulfanyl)-D-ribulose 1-phosphate = 5-methylsulfanyl-2,3-dioxopentyl phosphate + H2O. It functions in the pathway amino-acid biosynthesis; L-methionine biosynthesis via salvage pathway; L-methionine from S-methyl-5-thio-alpha-D-ribose 1-phosphate: step 2/6. In terms of biological role, catalyzes the dehydration of methylthioribulose-1-phosphate (MTRu-1-P) into 2,3-diketo-5-methylthiopentyl-1-phosphate (DK-MTP-1-P). This Leishmania braziliensis protein is Probable methylthioribulose-1-phosphate dehydratase.